The primary structure comprises 307 residues: MKLTLNRILFSGLALSILLTLTGCVGRDAHGNPKGMIWEFLGKPMSYFIDYFANNAGLGYGLAIIIVTIIVRTLILPLGLYQSWKASYQSEKMAFLKPVFEPINKRIKQANSQEEKMAAQTELMAAQRAHGINPLGGIGCLPLLIQMPFFSAMYFAAQYTKGVSTSTFMGIDLGSRSLVLTAIIAALYFFQSWLSMMAVSEEQREQMKTMMYTMPIMMIFMSFSLPAGVGLYWLVGGFFSIIQQLITTYLLKPRLHKQIKEEYAKNPPKAYQSTSSRKDVTPSQNMEQANLPKKIKSNRNAGKQRKR.

The signal sequence occupies residues 1 to 23 (MKLTLNRILFSGLALSILLTLTG). Residue Cys-24 is the site of N-palmitoyl cysteine attachment. Cys-24 is lipidated: S-diacylglycerol cysteine. A run of 5 helical transmembrane segments spans residues 58-78 (LGYG…ILPL), 135-155 (LGGI…AMYF), 179-199 (VLTA…MMAV), 209-225 (TMMY…SFSL), and 231-251 (LYWL…TYLL). A disordered region spans residues 263-307 (YAKNPPKAYQSTSSRKDVTPSQNMEQANLPKKIKSNRNAGKQRKR). Residues 271 to 288 (YQSTSSRKDVTPSQNMEQ) are compositionally biased toward polar residues. Residues 293–307 (KKIKSNRNAGKQRKR) show a composition bias toward basic residues.

It belongs to the OXA1/ALB3/YidC family. Type 2 subfamily.

It is found in the cell membrane. Functionally, required for the insertion and/or proper folding and/or complex formation of integral membrane proteins into the membrane. Involved in integration of membrane proteins that insert both dependently and independently of the Sec translocase complex, as well as at least some lipoproteins. The protein is Membrane protein insertase YidC 2 of Streptococcus pyogenes serotype M1.